The chain runs to 524 residues: Coronin-2A (524 aa).

WD repeat units lie at residues 80 to 120, 130 to 170, 178 to 217, 220 to 263, and 269 to 308; these read GHRG…LTRN, GHAR…SVIA, CHQDVILSMSFNTNGSLLATTCKDRKIRIVDPRLGIVLQE, YKGH…VPLT, and GSSGVLFPFFDSDTSMLYIVGKGDGNIRYYEVSMEKPHLT. A disordered region spans residues 403-436; the sequence is LLDSQTLPPERPLSNSMVQVSPQPLEPMKQPAED. Residues 404 to 424 show a composition bias toward polar residues; that stretch reads LDSQTLPPERPLSNSMVQVSP. Positions 484–523 form a coiled coil; sequence QMFYRQQEEIRRLRELLIQREVQTKQLELEIKNLRMALGQ.

It belongs to the WD repeat coronin family. As to quaternary structure, binds actin. Component of the N-Cor repressor complex, at least composed of NCOR1, NCOR2, HDAC3, TBL1X, TBL1R, CORO2A and GPS2.

The chain is Coronin-2A (Coro2a) from Mus musculus (Mouse).